Consider the following 565-residue polypeptide: MPLSAAIKSSLSVSVRADAKGLVGFANTGYNGITVLKQTYWTSFYMKGEYSGTVLLRLTGTDSGTVYGSRNLSVKSTGGKWTQYETTFEANESYVAENEWQLLFDAATAKGHPLHFGLVQLFPPTYKNRTNGLRNDIARPIADLKPKFLRFPGGNNIQADRPGDWHYPNTDALGLDEYLWWCEDMDMVPVLSVWDGKSYGGIVSGEELQPYLDDIKDELEVTLPLTLLSHPLRAYLTPNTNEQYLLGPPSTPFGALRARNGHPDPWPIQYIEIGNEDDYSGGCDTYPDRLVQIYDTIHASYPNLTLIANNMDENCLPEIPLPGLWHDYHYYRSADDLVAMFNYWDNHDRGDRVLVGEYGCRNDSNPDGVFWSFMQGSCAEAVHMIGLERNSDVVMMAAYAPLLQHFGYTQWSVCTPSASLAYLGIHPADRGEEQPTLFGFESRPNSLTLSTSYYVNRMFSTNQGSTVHKVHSTAGFGPLYWVATSNETAYQVKLANYGAANQTVNIRVPGVGRGVLEMISGPKDASNLPGDIKIVPVSRNIRAGKEGYTVHMPPWGVAVLVVVFK.

The first 19 residues, 1 to 19 (MPLSAAIKSSLSVSVRADA), serve as a signal peptide directing secretion. 7 N-linked (GlcNAc...) asparagine glycosylation sites follow: asparagine 71, asparagine 91, asparagine 128, asparagine 303, asparagine 362, asparagine 486, and asparagine 501.

The protein belongs to the glycosyl hydrolase 51 family.

It is found in the secreted. The catalysed reaction is Hydrolysis of terminal non-reducing alpha-L-arabinofuranoside residues in alpha-L-arabinosides.. It functions in the pathway glycan metabolism; L-arabinan degradation. Its function is as follows. Alpha-L-arabinofuranosidase involved in the degradation of arabinoxylan, a major component of plant hemicellulose. Acts only on small linear 1,5-alpha-linked L-arabinofuranosyl oligosaccharides. This chain is Probable alpha-L-arabinofuranosidase A (abfA), found in Emericella nidulans (strain FGSC A4 / ATCC 38163 / CBS 112.46 / NRRL 194 / M139) (Aspergillus nidulans).